The primary structure comprises 204 residues: N-(5'-phosphoribosyl)anthranilate isomerase (204 aa).

Belongs to the TrpF family.

It carries out the reaction N-(5-phospho-beta-D-ribosyl)anthranilate = 1-(2-carboxyphenylamino)-1-deoxy-D-ribulose 5-phosphate. Its pathway is amino-acid biosynthesis; L-tryptophan biosynthesis; L-tryptophan from chorismate: step 3/5. The sequence is that of N-(5'-phosphoribosyl)anthranilate isomerase from Bacillus cereus (strain B4264).